The primary structure comprises 515 residues: Fatty acyl-CoA reductase 1 (515 aa).

The Cytoplasmic segment spans residues 1-465 (MVSIPEYYEG…ARKHLNKLRN (465 aa)). The necessary and sufficient for PEX19-mediated localization into peroxisome membrane stretch occupies residues 451–507 (SGLPAARKHLNKLRNIRYGFNTILVILIWRIFIARSQMARNIWYFVVSLCYKFLSYF). Residues 466 to 483 (IRYGFNTILVILIWRIFI) traverse the membrane as a helical segment. Topologically, residues 484-515 (ARSQMARNIWYFVVSLCYKFLSYFRASSTMRY) are peroxisomal.

The protein belongs to the fatty acyl-CoA reductase family. As to quaternary structure, interacts with PEX19; PEX19 mediates the targeting of FAR1 to peroxisomes.

The protein localises to the peroxisome membrane. The catalysed reaction is a long-chain fatty acyl-CoA + 2 NADPH + 2 H(+) = a long-chain primary fatty alcohol + 2 NADP(+) + CoA. The enzyme catalyses hexadecanoyl-CoA + 2 NADPH + 2 H(+) = hexadecan-1-ol + 2 NADP(+) + CoA. It catalyses the reaction octadecanoyl-CoA + 2 NADPH + 2 H(+) = octadecan-1-ol + 2 NADP(+) + CoA. It carries out the reaction (9Z)-octadecenoyl-CoA + 2 NADPH + 2 H(+) = (9Z)-octadecen-1-ol + 2 NADP(+) + CoA. The catalysed reaction is (9Z,12Z)-octadecadienoyl-CoA + 2 NADPH + 2 H(+) = (9Z,12Z)-octadecadien-1-ol + 2 NADP(+) + CoA. The enzyme catalyses eicosanoyl-CoA + 2 NADPH + 2 H(+) = eicosan-1-ol + 2 NADP(+) + CoA. It catalyses the reaction 16-methylheptadecanoyl-CoA + 2 NADPH + 2 H(+) = 16-methylheptadecan-1-ol + 2 NADP(+) + CoA. It carries out the reaction 18-methylnonadecanoyl-CoA + 2 NADPH + 2 H(+) = 18-methylnonadecan-1-ol + 2 NADP(+) + CoA. Its function is as follows. Catalyzes the reduction of saturated and unsaturated C16 or C18 fatty acyl-CoA to fatty alcohols. It plays an essential role in the production of ether lipids/plasmalogens which synthesis requires fatty alcohols. In parallel, it is also required for wax monoesters production since fatty alcohols also constitute a substrate for their synthesis. In terms of biological role, catalyzes the reduction of saturated and unsaturated C16 or C18 fatty acyl-CoA to fatty alcohols. It plays an essential role in the production of ether lipids/plasmalogens which synthesis requires fatty alcohols. In parallel, it is also required for wax monoesters production since fatty alcohols also constitute a substrate for their synthesis. The polypeptide is Fatty acyl-CoA reductase 1 (Rattus norvegicus (Rat)).